Here is a 250-residue protein sequence, read N- to C-terminus: Adenosylcobinamide-GDP ribazoletransferase (250 aa).

6 helical membrane-spanning segments follow: residues 33–53 (IASYFPIVGIVIGGILSLLYI), 63–83 (IVMTFIVAFSYVLTGAMHIDG), 109–129 (LGTNGVLAAIFIVVLKILFLT), 137–157 (LTALLITPIIGRLSIVFSMMI), 180–200 (FAIAFVISIATSYFILPLAVF), and 203–223 (ILTISLFVTYIVSKYISLRIG).

Belongs to the CobS family. The cofactor is Mg(2+).

It localises to the cell membrane. The catalysed reaction is alpha-ribazole + adenosylcob(III)inamide-GDP = adenosylcob(III)alamin + GMP + H(+). It carries out the reaction alpha-ribazole 5'-phosphate + adenosylcob(III)inamide-GDP = adenosylcob(III)alamin 5'-phosphate + GMP + H(+). Its pathway is cofactor biosynthesis; adenosylcobalamin biosynthesis; adenosylcobalamin from cob(II)yrinate a,c-diamide: step 7/7. In terms of biological role, joins adenosylcobinamide-GDP and alpha-ribazole to generate adenosylcobalamin (Ado-cobalamin). Also synthesizes adenosylcobalamin 5'-phosphate from adenosylcobinamide-GDP and alpha-ribazole 5'-phosphate. In Thermoanaerobacter pseudethanolicus (strain ATCC 33223 / 39E) (Clostridium thermohydrosulfuricum), this protein is Adenosylcobinamide-GDP ribazoletransferase.